The primary structure comprises 166 residues: Cyclin-dependent kinase 4 inhibitor D (166 aa).

M1 bears the N-acetylmethionine mark. ANK repeat units lie at residues 41–69 (FGKTALQVMMFGSPAVALELLKQGASPNV), 73–102 (SGTSPVHDAARTGFLDTLKVLVEHGADVNA), 106–135 (TGSLPIHLAIREGHSSVVSFLAPESDLHHR), and 138–165 (SGLTPLELARQRGAQNLMDILQGHMMIP).

This sequence belongs to the CDKN2 cyclin-dependent kinase inhibitor family. As to quaternary structure, interacts with CDK6.

Its subcellular location is the nucleus. It is found in the cytoplasm. Its function is as follows. Interacts strongly with CDK4 and CDK6 and inhibits them. The sequence is that of Cyclin-dependent kinase 4 inhibitor D (Cdkn2d) from Mus musculus (Mouse).